A 239-amino-acid polypeptide reads, in one-letter code: Putative 3-methyladenine DNA glycosylase (239 aa).

This sequence belongs to the DNA glycosylase MPG family.

In Pseudomonas aeruginosa (strain ATCC 15692 / DSM 22644 / CIP 104116 / JCM 14847 / LMG 12228 / 1C / PRS 101 / PAO1), this protein is Putative 3-methyladenine DNA glycosylase.